The chain runs to 306 residues: Bacitracin transport ATP-binding protein BcrA (306 aa).

Residues 5–233 (IKTTDLTKMY…NRKYLEFQLS (229 aa)) enclose the ABC transporter domain. 37 to 44 (GRNGAGKT) provides a ligand contact to ATP.

It belongs to the ABC transporter superfamily.

Part of the binding-protein-dependent transport system for bacitracin that confer resistance to this antibiotic. Probably responsible for energy coupling to the transport system. This chain is Bacitracin transport ATP-binding protein BcrA (bcrA), found in Bacillus licheniformis.